Consider the following 139-residue polypeptide: Holo-[acyl-carrier-protein] synthase (139 aa).

The Mg(2+) site is built by D8 and E61.

It belongs to the P-Pant transferase superfamily. AcpS family. The cofactor is Mg(2+).

Its subcellular location is the cytoplasm. It carries out the reaction apo-[ACP] + CoA = holo-[ACP] + adenosine 3',5'-bisphosphate + H(+). Transfers the 4'-phosphopantetheine moiety from coenzyme A to a Ser of acyl-carrier-protein. This Rhodopseudomonas palustris (strain BisB5) protein is Holo-[acyl-carrier-protein] synthase.